We begin with the raw amino-acid sequence, 249 residues long: uncharacterized protein (249 aa).

In terms of domain architecture, S4 RNA-binding spans P7–F64. The Nucleophile role is filled by D112.

It belongs to the pseudouridine synthase RsuA family.

It carries out the reaction a uridine in RNA = a pseudouridine in RNA. This is an uncharacterized protein from Borreliella burgdorferi (strain ATCC 35210 / DSM 4680 / CIP 102532 / B31) (Borrelia burgdorferi).